Reading from the N-terminus, the 224-residue chain is UPF0758 protein Avin_02940 (224 aa).

Positions 102 to 224 (ALESPQAVRD…PLSMAEQGWL (123 aa)) constitute an MPN domain. The Zn(2+) site is built by H173, H175, and D186. Positions 173–186 (HNHPSGIAEPSQAD) match the JAMM motif motif.

This sequence belongs to the UPF0758 family.

The sequence is that of UPF0758 protein Avin_02940 from Azotobacter vinelandii (strain DJ / ATCC BAA-1303).